A 482-amino-acid chain; its full sequence is Cobyrinate a,c-diamide synthase (482 aa).

The 194-residue stretch at 248–441 (RLAIAQDQAF…LHLHWGSQIS (194 aa)) folds into the GATase cobBQ-type domain. Residue Cys331 is the Nucleophile of the active site.

This sequence belongs to the CobB/CbiA family. Mg(2+) is required as a cofactor.

The catalysed reaction is cob(II)yrinate + 2 L-glutamine + 2 ATP + 2 H2O = cob(II)yrinate a,c diamide + 2 L-glutamate + 2 ADP + 2 phosphate + 2 H(+). Its pathway is cofactor biosynthesis; adenosylcobalamin biosynthesis; cob(II)yrinate a,c-diamide from sirohydrochlorin (anaerobic route): step 10/10. In terms of biological role, catalyzes the ATP-dependent amidation of the two carboxylate groups at positions a and c of cobyrinate, using either L-glutamine or ammonia as the nitrogen source. The chain is Cobyrinate a,c-diamide synthase from Synechocystis sp. (strain ATCC 27184 / PCC 6803 / Kazusa).